We begin with the raw amino-acid sequence, 1023 residues long: Lon protease homolog (1023 aa).

515-522 is an ATP binding site; it reads GPPGVGKT. The 194-residue stretch at 810 to 1003 folds into the Lon proteolytic domain; it reads TNMIGVINGL…IEIITDPNVI (194 aa). Ser906 is an active-site residue.

This sequence belongs to the peptidase S16 family.

In Acanthamoeba polyphaga (Amoeba), this protein is Lon protease homolog.